A 739-amino-acid chain; its full sequence is NAD(P)H-quinone oxidoreductase subunit 5, chloroplastic (739 aa).

16 helical membrane passes run 9–29 (WIIP…LLLV), 39–59 (IWAF…ADLA), 89–109 (IDPL…MVLI), 125–145 (FAYM…SNLI), 147–167 (IYIF…FWFT), 185–205 (GDFG…SFEF), 224–244 (LFAA…SAQF), 258–278 (TPIS…FLVA), 280–300 (LLPL…IGII), 327–347 (LGYI…FHLI), 354–374 (ALLF…VGYS), 396–416 (TTFF…CFWS), 425–445 (WLYS…TAFY), 544–564 (LFPM…GIPF), 603–623 (IYSV…YGSV), and 719–739 (YIFL…FFSF).

The protein belongs to the complex I subunit 5 family. NDH is composed of at least 16 different subunits, 5 of which are encoded in the nucleus.

It localises to the plastid. Its subcellular location is the chloroplast thylakoid membrane. The catalysed reaction is a plastoquinone + NADH + (n+1) H(+)(in) = a plastoquinol + NAD(+) + n H(+)(out). It catalyses the reaction a plastoquinone + NADPH + (n+1) H(+)(in) = a plastoquinol + NADP(+) + n H(+)(out). Its function is as follows. NDH shuttles electrons from NAD(P)H:plastoquinone, via FMN and iron-sulfur (Fe-S) centers, to quinones in the photosynthetic chain and possibly in a chloroplast respiratory chain. The immediate electron acceptor for the enzyme in this species is believed to be plastoquinone. Couples the redox reaction to proton translocation, and thus conserves the redox energy in a proton gradient. This Acorus calamus var. americanus (American sweet flag) protein is NAD(P)H-quinone oxidoreductase subunit 5, chloroplastic (ndhF).